An 864-amino-acid polypeptide reads, in one-letter code: Translation initiation factor IF-2 (864 aa).

The disordered stretch occupies residues 1-252 (MEDKNKTIKE…KTSSDKRDFS (252 aa)). Positions 78–90 (KEVKYEESSRKQD) are enriched in basic and acidic residues. The segment covering 106–120 (VRPSGDSSYPVSRSP) has biased composition (polar residues). Over residues 150–212 (RGPGQGGGYQ…PGNRSGGPGG (63 aa)) the composition is skewed to gly residues. Over residues 239-252 (HDKEKTSSDKRDFS) the composition is skewed to basic and acidic residues. One can recognise a tr-type G domain in the interval 359-528 (NRPPVVTIMG…LLQAEVMDLK (170 aa)). The tract at residues 368–375 (GHVDHGKT) is G1. 368 to 375 (GHVDHGKT) provides a ligand contact to GTP. The tract at residues 393–397 (GITQH) is G2. The interval 414-417 (DTPG) is G3. GTP-binding positions include 414–418 (DTPGH) and 468–471 (NKID). Residues 468-471 (NKID) are G4. Positions 504-506 (SAR) are G5.

It belongs to the TRAFAC class translation factor GTPase superfamily. Classic translation factor GTPase family. IF-2 subfamily.

It is found in the cytoplasm. In terms of biological role, one of the essential components for the initiation of protein synthesis. Protects formylmethionyl-tRNA from spontaneous hydrolysis and promotes its binding to the 30S ribosomal subunits. Also involved in the hydrolysis of GTP during the formation of the 70S ribosomal complex. The chain is Translation initiation factor IF-2 from Leptospira borgpetersenii serovar Hardjo-bovis (strain L550).